The chain runs to 338 residues: Ketol-acid reductoisomerase (NADP(+)) (338 aa).

In terms of domain architecture, KARI N-terminal Rossmann spans 1-181; it reads MKVFYDKDAD…GGGRAGIIET (181 aa). NADP(+) is bound by residues 24 to 27, arginine 47, and serine 52; that span reads YGSQ. Histidine 107 is an active-site residue. Glycine 133 is an NADP(+) binding site. The region spanning 182-327 is the KARI C-terminal knotted domain; sequence NFREETETDL…AKLRAMMPWI (146 aa). 4 residues coordinate Mg(2+): aspartate 190, glutamate 194, glutamate 226, and glutamate 230. Serine 251 is a binding site for substrate.

It belongs to the ketol-acid reductoisomerase family. Requires Mg(2+) as cofactor.

The enzyme catalyses (2R)-2,3-dihydroxy-3-methylbutanoate + NADP(+) = (2S)-2-acetolactate + NADPH + H(+). The catalysed reaction is (2R,3R)-2,3-dihydroxy-3-methylpentanoate + NADP(+) = (S)-2-ethyl-2-hydroxy-3-oxobutanoate + NADPH + H(+). The protein operates within amino-acid biosynthesis; L-isoleucine biosynthesis; L-isoleucine from 2-oxobutanoate: step 2/4. It functions in the pathway amino-acid biosynthesis; L-valine biosynthesis; L-valine from pyruvate: step 2/4. Functionally, involved in the biosynthesis of branched-chain amino acids (BCAA). Catalyzes an alkyl-migration followed by a ketol-acid reduction of (S)-2-acetolactate (S2AL) to yield (R)-2,3-dihydroxy-isovalerate. In the isomerase reaction, S2AL is rearranged via a Mg-dependent methyl migration to produce 3-hydroxy-3-methyl-2-ketobutyrate (HMKB). In the reductase reaction, this 2-ketoacid undergoes a metal-dependent reduction by NADPH to yield (R)-2,3-dihydroxy-isovalerate. This Ralstonia nicotianae (strain ATCC BAA-1114 / GMI1000) (Ralstonia solanacearum) protein is Ketol-acid reductoisomerase (NADP(+)).